Reading from the N-terminus, the 136-residue chain is Large ribosomal subunit protein uL16 (136 aa).

It belongs to the universal ribosomal protein uL16 family. Part of the 50S ribosomal subunit.

In terms of biological role, binds 23S rRNA and is also seen to make contacts with the A and possibly P site tRNAs. In Glaesserella parasuis serovar 5 (strain SH0165) (Haemophilus parasuis), this protein is Large ribosomal subunit protein uL16.